Consider the following 75-residue polypeptide: Putative sulfur carrier protein TsuB (75 aa).

Cys-13 (cysteine persulfide intermediate) is an active-site residue.

The protein belongs to the sulfur carrier protein TusA family.

Its function is as follows. Involved in thiosulfate metabolism. In Escherichia coli (strain K12), this protein is Putative sulfur carrier protein TsuB.